Here is a 465-residue protein sequence, read N- to C-terminus: MESFFNSLINIPSDFIWKYLFYILIGLGLFFTIRFGFIQFRYFIEMFRIVGEKPEGNKGVSSMQAFFISAASRVGTGNLTGVALAIATGGPGAVFWMWVVAAVGMASSFVESTLAQLYKVRDGEDFRGGPAYYIQKGLGARWLGIVFAILITVSFGLIFNAVQTNTIAGALDGAFHVNKIVVAIVLAVLTAFIIFGGLKRVVAVSQLIVPVMAGIYILIALFVVITNITAFPGVIATIVKNALGFEQVVGGGIGGIIVIGAQRGLFSNEAGMGSAPNAAATAHVSHPAKQGFIQTLGVFFDTFIICTSTAFIILLYSVTPKGDGIQVTQAALNHHIGGWAPTFIAVAMFLFAFSSVVGNYYYGETNIEFIKTSKTWLNIYRIAVIAMVVYGSLSGFQIVWDMADLFMGIMALINLIVIALLSNVAYKVYKDYAKQRKQGLDPVFKAKNIPGLKNAETWEDEKQEA.

The next 10 membrane-spanning stretches (helical) occupy residues 20-40 (LFYI…FIQF), 82-102 (VALA…VVAA), 142-162 (WLGI…FNAV), 177-197 (VNKI…IFGG), 208-228 (IVPV…ITNI), 241-261 (NALG…VIGA), 296-316 (LGVF…ILLY), 336-356 (IGGW…FSSV), 382-402 (IAVI…VWDM), and 405-425 (LFMG…SNVA).

It belongs to the alanine or glycine:cation symporter (AGCS) (TC 2.A.25) family.

The protein localises to the cell membrane. The polypeptide is Amino-acid carrier protein AlsT (alsT) (Bacillus subtilis (strain 168)).